A 436-amino-acid polypeptide reads, in one-letter code: Histidinol dehydrogenase (436 aa).

3 residues coordinate substrate: T240, Q262, and H265. Zn(2+) contacts are provided by Q262 and H265. Catalysis depends on proton acceptor residues E331 and H332. Substrate contacts are provided by H332, D365, E419, and H424. D365 lines the Zn(2+) pocket. Position 424 (H424) interacts with Zn(2+).

It belongs to the histidinol dehydrogenase family. Zn(2+) is required as a cofactor.

It catalyses the reaction L-histidinol + 2 NAD(+) + H2O = L-histidine + 2 NADH + 3 H(+). The protein operates within amino-acid biosynthesis; L-histidine biosynthesis; L-histidine from 5-phospho-alpha-D-ribose 1-diphosphate: step 9/9. In terms of biological role, catalyzes the sequential NAD-dependent oxidations of L-histidinol to L-histidinaldehyde and then to L-histidine. The protein is Histidinol dehydrogenase of Leifsonia xyli subsp. xyli (strain CTCB07).